A 252-amino-acid polypeptide reads, in one-letter code: Probable endonuclease 4 (252 aa).

Zn(2+) contacts are provided by His-56, His-96, Glu-129, Asp-162, His-165, His-191, Asp-204, His-206, and Glu-233.

It belongs to the AP endonuclease 2 family. Zn(2+) is required as a cofactor.

It carries out the reaction Endonucleolytic cleavage to 5'-phosphooligonucleotide end-products.. In terms of biological role, endonuclease IV plays a role in DNA repair. It cleaves phosphodiester bonds at apurinic or apyrimidinic (AP) sites, generating a 3'-hydroxyl group and a 5'-terminal sugar phosphate. This Mycobacterium marinum (strain ATCC BAA-535 / M) protein is Probable endonuclease 4.